Reading from the N-terminus, the 138-residue chain is Translation initiation factor 5A (138 aa).

At Lys-42 the chain carries Hypusine.

Belongs to the eIF-5A family.

It is found in the cytoplasm. In terms of biological role, functions by promoting the formation of the first peptide bond. This is Translation initiation factor 5A (eif5a) from Pyrobaculum aerophilum (strain ATCC 51768 / DSM 7523 / JCM 9630 / CIP 104966 / NBRC 100827 / IM2).